A 642-amino-acid polypeptide reads, in one-letter code: ATP-dependent zinc metalloprotease FtsH (642 aa).

The Cytoplasmic portion of the chain corresponds to 1–6 (MGRFTK). A helical transmembrane segment spans residues 7–27 (NIVLYLLIIAAFVIAIDAFSG). Residues 28–101 (QSANKSELSY…TAAPPEQPAW (74 aa)) lie on the Extracellular side of the membrane. The helical transmembrane segment at 102-122 (WMSLLGSAIPIIILVVLFFFI) threads the bilayer. The Cytoplasmic segment spans residues 123-642 (MQQTQGGGGR…LSEASSNEIK (520 aa)). 194-201 (GPPGTGKT) lines the ATP pocket. His-416 serves as a coordination point for Zn(2+). The active site involves Glu-417. Residues His-420 and Asp-492 each contribute to the Zn(2+) site. Positions 597 to 610 (TTKEPEAEEPKVAS) are enriched in basic and acidic residues. Positions 597 to 642 (TTKEPEAEEPKVASEADSSIVPEGVDAKKTTSTVADLSEASSNEIK) are disordered. Polar residues predominate over residues 626–642 (TTSTVADLSEASSNEIK).

It in the central section; belongs to the AAA ATPase family. The protein in the C-terminal section; belongs to the peptidase M41 family. Homohexamer. Zn(2+) serves as cofactor.

Its subcellular location is the cell membrane. Acts as a processive, ATP-dependent zinc metallopeptidase for both cytoplasmic and membrane proteins. Plays a role in the quality control of integral membrane proteins. The chain is ATP-dependent zinc metalloprotease FtsH from Veillonella parvula (strain ATCC 10790 / DSM 2008 / CCUG 5123 / JCM 12972 / NCTC 11810 / Te3) (Veillonella alcalescens).